The primary structure comprises 482 residues: MSDKTKTNEGFSRRSFIGSAAVVTAGVAGLGAIDAASATQKTNRASTVKGGFDYDVVVVGGGFAGATAARECGLQGYRTLLLEARSRLGGRTFTSRFAGQEIEFGGAWVHWLQPHVWAEMQRYGLGVVEDPLTNLDKTLIMYNDGSVESISPDEFGKNIRIAFEKLCHDAWEVFPRPHEPMFTERARELDKSSVLDRIKTLGLSRLQQAQINSYMALYAGETTDKFGLPGVLKLFACGGWNYDAFMDTETHYRIQGGTIGLINAMLTDSGAEVRMSVPVTAVEQVNGGVKIKTDDDEIITAGVVVMTVPLNTYKHIGFTPALSKGKQRFIKEGQLSKGAKLYVHVKQNLGRVFAFADEQQPLNWVQTHDYSDELGTILSITIARKETIDVNDRDAVTREVQKMFPGVEVLGTAAYDWTADPFSLGAWAAYGVGQLSRLKDLQAAEGRILFAGAETSNGWHANIDGAVESGLRAGREVKQLLS.

The tat-type signal signal peptide spans 1–38 (MSDKTKTNEGFSRRSFIGSAAVVTAGVAGLGAIDAASA). Residues Ala64, Glu83, Ala84, Arg85, Arg91, Trp108, and Val279 each coordinate FAD. Thr381 is a binding site for (S)-nicotine. FAD contacts are provided by Ala453, Asn462, and Ile463.

Belongs to the flavin monoamine oxidase family. Monomer in solution. Homodimer in solution. Forms homodimers in the crystal. The cofactor is FAD. Post-translationally, predicted to be exported by the Tat system. The position of the signal peptide cleavage has not been experimentally proven.

It is found in the periplasm. It catalyses the reaction (S)-nicotine + 2 Fe(III)-[cytochrome c] = N-methylmyosmine + 2 Fe(II)-[cytochrome c] + 2 H(+). It functions in the pathway alkaloid degradation; nicotine degradation. The catalytic rate is not significantly affected by pH. In terms of biological role, involved in nicotine degradation. Catalyzes the conversion of nicotine to N-methylmyosmine. N-methylmyosmine undergoes spontaneous hydrolysis to form pseudooxynicotine (PN). S-nicotine is the optimal substrate. Has lower activity with some nicotine analogs, but shows no activity towards neurotransmitters, including serotonin, dopamine, and norepinephrine, nicotine metabolites and common neuroactive drugs. The enzyme is stereospecific with poor activity with (R)-nicotine as the substrate. The c-type cytochrome protein CycN is the physiological electron acceptor. O(2) is a poor electron acceptor. This is Nicotine dehydrogenase from Pseudomonas putida (strain DSM 28022 / S16).